A 370-amino-acid chain; its full sequence is Aspartate-semialdehyde dehydrogenase 1 (370 aa).

Residues arginine 9–valine 12, threonine 36–serine 37, and glutamine 72 each bind NADP(+). Residue arginine 101 participates in phosphate binding. The Acyl-thioester intermediate role is filled by cysteine 134. Cysteine 134 carries the S-cysteinyl cysteine; in inhibited form modification. A substrate-binding site is contributed by glutamine 161. Residues serine 164–glycine 165 and proline 192 each bind NADP(+). Glutamate 240 serves as a coordination point for substrate. Lysine 243 is a phosphate binding site. Arginine 267 is a binding site for substrate. The active-site Proton acceptor is the histidine 274. Glutamine 350 lines the NADP(+) pocket.

The protein belongs to the aspartate-semialdehyde dehydrogenase family. As to quaternary structure, homodimer.

It catalyses the reaction L-aspartate 4-semialdehyde + phosphate + NADP(+) = 4-phospho-L-aspartate + NADPH + H(+). The protein operates within amino-acid biosynthesis; L-lysine biosynthesis via DAP pathway; (S)-tetrahydrodipicolinate from L-aspartate: step 2/4. It functions in the pathway amino-acid biosynthesis; L-methionine biosynthesis via de novo pathway; L-homoserine from L-aspartate: step 2/3. Its pathway is amino-acid biosynthesis; L-threonine biosynthesis; L-threonine from L-aspartate: step 2/5. Its activity is regulated as follows. Inhibited by S-methyl-L-cysteine sulfoxide in vitro, via the formation of a covalently bound cysteine at the active site Cys-134. In terms of biological role, catalyzes the NADPH-dependent formation of L-aspartate-semialdehyde (L-ASA) by the reductive dephosphorylation of L-aspartyl-4-phosphate. The protein is Aspartate-semialdehyde dehydrogenase 1 (asd1) of Vibrio cholerae serotype O1 (strain ATCC 39315 / El Tor Inaba N16961).